Consider the following 209-residue polypeptide: Thiamine-phosphate synthase (209 aa).

4-amino-2-methyl-5-(diphosphooxymethyl)pyrimidine contacts are provided by residues 35–39 (QLRNK) and N67. Mg(2+) is bound by residues D68 and D87. 4-amino-2-methyl-5-(diphosphooxymethyl)pyrimidine is bound at residue S106. Residue 132–134 (TGS) coordinates 2-[(2R,5Z)-2-carboxy-4-methylthiazol-5(2H)-ylidene]ethyl phosphate. K135 lines the 4-amino-2-methyl-5-(diphosphooxymethyl)pyrimidine pocket. Residues G163 and 183-184 (IS) contribute to the 2-[(2R,5Z)-2-carboxy-4-methylthiazol-5(2H)-ylidene]ethyl phosphate site.

This sequence belongs to the thiamine-phosphate synthase family. The cofactor is Mg(2+).

The catalysed reaction is 2-[(2R,5Z)-2-carboxy-4-methylthiazol-5(2H)-ylidene]ethyl phosphate + 4-amino-2-methyl-5-(diphosphooxymethyl)pyrimidine + 2 H(+) = thiamine phosphate + CO2 + diphosphate. It carries out the reaction 2-(2-carboxy-4-methylthiazol-5-yl)ethyl phosphate + 4-amino-2-methyl-5-(diphosphooxymethyl)pyrimidine + 2 H(+) = thiamine phosphate + CO2 + diphosphate. The enzyme catalyses 4-methyl-5-(2-phosphooxyethyl)-thiazole + 4-amino-2-methyl-5-(diphosphooxymethyl)pyrimidine + H(+) = thiamine phosphate + diphosphate. It participates in cofactor biosynthesis; thiamine diphosphate biosynthesis; thiamine phosphate from 4-amino-2-methyl-5-diphosphomethylpyrimidine and 4-methyl-5-(2-phosphoethyl)-thiazole: step 1/1. Condenses 4-methyl-5-(beta-hydroxyethyl)thiazole monophosphate (THZ-P) and 2-methyl-4-amino-5-hydroxymethyl pyrimidine pyrophosphate (HMP-PP) to form thiamine monophosphate (TMP). In Chlorobium phaeovibrioides (strain DSM 265 / 1930) (Prosthecochloris vibrioformis (strain DSM 265)), this protein is Thiamine-phosphate synthase.